The sequence spans 1203 residues: ATP-dependent helicase/nuclease subunit A (1203 aa).

Positions 4–472 (VKLTPEQNEA…IRLKENFRSR (469 aa)) constitute a UvrD-like helicase ATP-binding domain. 25–32 (ASAGSGKT) contacts ATP. Positions 503 to 785 (VQGNISDYPV…RVMTFHKSKG (283 aa)) constitute a UvrD-like helicase C-terminal domain.

Belongs to the helicase family. AddA subfamily. In terms of assembly, heterodimer of AddA and AddB/RexB. Mg(2+) serves as cofactor.

It catalyses the reaction Couples ATP hydrolysis with the unwinding of duplex DNA by translocating in the 3'-5' direction.. It carries out the reaction ATP + H2O = ADP + phosphate + H(+). Its function is as follows. The heterodimer acts as both an ATP-dependent DNA helicase and an ATP-dependent, dual-direction single-stranded exonuclease. Recognizes the chi site generating a DNA molecule suitable for the initiation of homologous recombination. The AddA nuclease domain is required for chi fragment generation; this subunit has the helicase and 3' -&gt; 5' nuclease activities. The polypeptide is ATP-dependent helicase/nuclease subunit A (Lactococcus lactis subsp. cremoris (strain SK11)).